Reading from the N-terminus, the 444-residue chain is Methylenetetrahydrofolate--tRNA-(uracil-5-)-methyltransferase TrmFO (444 aa).

An FAD-binding site is contributed by 11–16; the sequence is GGGLAG.

This sequence belongs to the MnmG family. TrmFO subfamily. Requires FAD as cofactor.

It is found in the cytoplasm. It catalyses the reaction uridine(54) in tRNA + (6R)-5,10-methylene-5,6,7,8-tetrahydrofolate + NADH + H(+) = 5-methyluridine(54) in tRNA + (6S)-5,6,7,8-tetrahydrofolate + NAD(+). It carries out the reaction uridine(54) in tRNA + (6R)-5,10-methylene-5,6,7,8-tetrahydrofolate + NADPH + H(+) = 5-methyluridine(54) in tRNA + (6S)-5,6,7,8-tetrahydrofolate + NADP(+). Its function is as follows. Catalyzes the folate-dependent formation of 5-methyl-uridine at position 54 (M-5-U54) in all tRNAs. In Desulfotalea psychrophila (strain LSv54 / DSM 12343), this protein is Methylenetetrahydrofolate--tRNA-(uracil-5-)-methyltransferase TrmFO.